A 112-amino-acid polypeptide reads, in one-letter code: Large ribosomal subunit protein uL22 (112 aa).

It belongs to the universal ribosomal protein uL22 family. As to quaternary structure, part of the 50S ribosomal subunit.

In terms of biological role, this protein binds specifically to 23S rRNA; its binding is stimulated by other ribosomal proteins, e.g. L4, L17, and L20. It is important during the early stages of 50S assembly. It makes multiple contacts with different domains of the 23S rRNA in the assembled 50S subunit and ribosome. Functionally, the globular domain of the protein is located near the polypeptide exit tunnel on the outside of the subunit, while an extended beta-hairpin is found that lines the wall of the exit tunnel in the center of the 70S ribosome. This is Large ribosomal subunit protein uL22 from Nitratidesulfovibrio vulgaris (strain DSM 19637 / Miyazaki F) (Desulfovibrio vulgaris).